We begin with the raw amino-acid sequence, 378 residues long: Putative UDP-N-acetylglucosamine 2-epimerase (378 aa).

Belongs to the UDP-N-acetylglucosamine 2-epimerase family.

The protein localises to the cytoplasm. It carries out the reaction UDP-N-acetyl-alpha-D-glucosamine = UDP-N-acetyl-alpha-D-mannosamine. The protein is Putative UDP-N-acetylglucosamine 2-epimerase of Thermotoga maritima (strain ATCC 43589 / DSM 3109 / JCM 10099 / NBRC 100826 / MSB8).